The following is a 353-amino-acid chain: Phosphate acyltransferase (353 aa).

This sequence belongs to the PlsX family. In terms of assembly, homodimer. Probably interacts with PlsY.

It is found in the cytoplasm. It catalyses the reaction a fatty acyl-[ACP] + phosphate = an acyl phosphate + holo-[ACP]. It participates in lipid metabolism; phospholipid metabolism. Its function is as follows. Catalyzes the reversible formation of acyl-phosphate (acyl-PO(4)) from acyl-[acyl-carrier-protein] (acyl-ACP). This enzyme utilizes acyl-ACP as fatty acyl donor, but not acyl-CoA. This chain is Phosphate acyltransferase, found in Rhodopseudomonas palustris (strain HaA2).